The chain runs to 1037 residues: MASSPTPSLDSMRGGANSIESYEHAGYLSDSPLTLSGSSPPASDSAICSDEYTGGSSVKSRSEVTVINGHHPISASVSSSSSASSSSCSSSSSSSSSSSSSSSSTSGLSGCGSTSSSVISANNVASSNGPGVIGSNLQSSNNGGNSGISSLVVGAGKGSNSSSNSSSSNTSANGSPPRCTACKSKCSDAVAKCFECQSYLCANCVTAHEFMHCFNGHNVCLIKGFEASTTGTPLSVGSPSNNPASNEFKYASSLTMMLQQQQQLDSQQQQQQQQLLPAQPMSQLSKIVLAAAAQANSQEQQREDSIYGSLHPQQQQQQQQQQQRQLFCPRHKQELLKFSCRTCCILVCKECIVLEHSTGLHELENVQSPGMTTSTGSTANESALQTLLADMRGKIGEIVGIAGNSDQNLTKVKLQYQKAHNELNETHQFFASMLDERKTELLKELETLYTAKVNSNNSWQQRSRDLIDKGLATCEAVERSPAPPSSLLTEALLLRKSLEQQLQTGIQEMQLPFEIEFMSNYQSIQAGVRNTFGYIRANSSDGGPTGMSLTSNGHGKQPPIARPTQSASNSSASSAGSGHHGHHQQSHHHGHHNHHQTAHHQQLQAQSSLHGLGLGLSGASLLDSSSSAGGAVGAFSNGGLLLGGRDRNALAVEQHFGELMPKRGGGGYTGSNGSATSAVAHYNPYEKWSNGGSDNLFSSVTSGVSGSSAVADAFASLSAVGGSVVSGAGAGGSTVSSESLLDLTNKLLSATIYPPKSQIKRQKMIYHCKFGEFGVMEGQFTEPSGVAVNAQNDIIVADTNNHRIQIFDKEGRFKFQFGECGKRDSQLLYPNRVAVVRNSGDIIVTERSPTHQIQIYNQYGQFVRKFGATILQHPRGVTVDNKGRIIVVECKVMRVIIFDQNGNVLHKFGCSKHLEFPNGVVVNDKQEIFISDNRAHCVKVFNYEGQYLRQIGGEGITNYPIGVGINSNGEILIADNHNNFNLTIFTQDGQLISALESKVKHAQCFDVALMDDGSVVLASKDYRLYIYRYVQLAPVGM.

2 disordered regions span residues 29–63 (SDSP…SRSE) and 159–178 (SNSS…SPPR). 2 stretches are compositionally biased toward polar residues: residues 31-42 (SPLTLSGSSPPA) and 54-63 (GGSSVKSRSE). The segment covering 159–175 (SNSSSNSSSSNTSANGS) has biased composition (low complexity). The segment at 174 to 222 (GSPPRCTACKSKCSDAVAKCFECQSYLCANCVTAHEFMHCFNGHNVCLI) adopts a B box-type 1; atypical zinc-finger fold. Zn(2+) contacts are provided by Cys-179, Cys-182, Cys-204, His-208, Cys-328, His-331, Cys-351, and His-356. Residues 323-366 (QRQLFCPRHKQELLKFSCRTCCILVCKECIVLEHSTGLHELENV) form a B box-type 2 zinc finger. The segment covering 543–554 (GPTGMSLTSNGH) has biased composition (polar residues). The segment at 543–606 (GPTGMSLTSN…TAHHQQLQAQ (64 aa)) is disordered. A compositionally biased stretch (low complexity) spans 565–577 (QSASNSSASSAGS). Positions 579 to 598 (HHGHHQQSHHHGHHNHHQTA) are enriched in basic residues. NHL repeat units follow at residues 767–810 (HCKF…FDKE), 814–859 (KFQF…YNQY), 860–901 (GQFV…FDQN), 902–944 (GNVL…FNYE), and 945–988 (GQYL…FTQD).

In terms of assembly, interacts with nanos (nos) and pum. Acts via the formation of a quaternary complex composed of pum, nanos, brat and the 3'-UTR mRNA of hb. Not recruited by nanos and pum to cyclin B 3'-UTR mRNA. Might interact with mira; the interaction seems to be important for brat localization during mitosis. Interacts with Ago1. In terms of tissue distribution, expressed during embryogenesis, mainly in nervous tissues. Expressed in the embryonic central and peripheral nervous systems including the embryonic brain. In third instar larva it is expressed in the larval central nervous system including the brain and the ventral ganglion, in two glands (the ring gland and the salivary gland, and in parts of the foregut) the gastric caeca and the proventriculus.

Its subcellular location is the cytoplasm. It localises to the cell cortex. In terms of biological role, a NHL-domain family protein that functions as a translational repressor to inhibit cell proliferation. Plays a central role in translation repression of hb mRNA by being recruited by nanos (nos) and pum to the Nanos Response Element (NRE), a 16 bp sequence in the hb mRNA 3'-UTR. Probably recruited by other proteins to repress translation of other mRNAs in other tissues. Negatively regulates expression of Myc in a 3'-UTR dependent manner in both neural progenitor and epithelial cells. Regulates expression of mei-P26, possibly at transcriptional level. Involved in the regulation of ribosomal RNA synthesis and cell growth. Participates in abdominal segmentation and imaginal disk development. During neuroblast division, segregates asymmetrically and inhibits self-renewal of one of the two daughter cells. Together with the asymmetrically segregating transcription factor prospero ensures that the daughter cell will stop growing, exit the cell cycle, and differentiate into neurons possibly by modulating the function of dm in ganglion mother cells (GMC). Restricts developmental potential of type II intermediary neuronal progenitor (INP) cells playing a role in proliferation and maturation of the neuroblasts. The polypeptide is Protein brain tumor (Drosophila melanogaster (Fruit fly)).